A 544-amino-acid polypeptide reads, in one-letter code: Chaperonin GroEL (544 aa).

ATP contacts are provided by residues 29–32 (TLGP), lysine 50, 86–90 (DGTTT), glycine 414, 479–481 (DAA), and aspartate 495.

It belongs to the chaperonin (HSP60) family. As to quaternary structure, forms a cylinder of 14 subunits composed of two heptameric rings stacked back-to-back. Interacts with the co-chaperonin GroES.

The protein resides in the cytoplasm. The catalysed reaction is ATP + H2O + a folded polypeptide = ADP + phosphate + an unfolded polypeptide.. Together with its co-chaperonin GroES, plays an essential role in assisting protein folding. The GroEL-GroES system forms a nano-cage that allows encapsulation of the non-native substrate proteins and provides a physical environment optimized to promote and accelerate protein folding. This Treponema denticola (strain ATCC 35405 / DSM 14222 / CIP 103919 / JCM 8153 / KCTC 15104) protein is Chaperonin GroEL.